The following is a 420-amino-acid chain: Pyrin and HIN domain-containing protein 1 (420 aa).

Residues 1-87 (MVNEYKRIVL…ANKLKNEKAK (87 aa)) enclose the Pyrin domain. 2 disordered regions span residues 82 to 201 (KNEK…SSSA) and 216 to 236 (RLKNVPKEPSEENGHQQGSKK). Basic residues predominate over residues 87-102 (KAKRTRTGKRKTAAKR). Polar residues-rich tracts occupy residues 108–118 (PSTSQPMSTTN) and 126–151 (GRSTPDTQVAQLSLPTASRRNQAIQI). Low complexity predominate over residues 152 to 169 (SPTIASSSGQTSSRSSET). The span at 170–201 (LQSIIQSPKTPKRPSSSILDPPVSSGTASSSA) shows a compositional bias: polar residues. An HIN-200 domain is found at 219–416 (NVPKEPSEEN…STTHSNMQVI (198 aa)). Residues 220-229 (VPKEPSEENG) are compositionally biased toward basic and acidic residues.

Belongs to the HIN-200 family.

The protein resides in the nucleus. In Mus musculus (Mouse), this protein is Pyrin and HIN domain-containing protein 1.